We begin with the raw amino-acid sequence, 272 residues long: Acetyl-coenzyme A carboxylase carboxyl transferase subunit alpha (272 aa).

Positions 1 to 248 constitute a CoA carboxyltransferase C-terminal domain; the sequence is MDKDFMKINV…KKTIVDSLLE (248 aa).

It belongs to the AccA family. In terms of assembly, acetyl-CoA carboxylase is a heterohexamer composed of biotin carboxyl carrier protein (AccB), biotin carboxylase (AccC) and two subunits each of ACCase subunit alpha (AccA) and ACCase subunit beta (AccD).

It is found in the cytoplasm. The enzyme catalyses N(6)-carboxybiotinyl-L-lysyl-[protein] + acetyl-CoA = N(6)-biotinyl-L-lysyl-[protein] + malonyl-CoA. It functions in the pathway lipid metabolism; malonyl-CoA biosynthesis; malonyl-CoA from acetyl-CoA: step 1/1. In terms of biological role, component of the acetyl coenzyme A carboxylase (ACC) complex. First, biotin carboxylase catalyzes the carboxylation of biotin on its carrier protein (BCCP) and then the CO(2) group is transferred by the carboxyltransferase to acetyl-CoA to form malonyl-CoA. The sequence is that of Acetyl-coenzyme A carboxylase carboxyl transferase subunit alpha from Clostridium beijerinckii (strain ATCC 51743 / NCIMB 8052) (Clostridium acetobutylicum).